We begin with the raw amino-acid sequence, 379 residues long: NADH-quinone oxidoreductase subunit D 1 (379 aa).

The protein belongs to the complex I 49 kDa subunit family. As to quaternary structure, NDH-1 is composed of 14 different subunits. Subunits NuoB, C, D, E, F, and G constitute the peripheral sector of the complex.

It localises to the cell inner membrane. It carries out the reaction a quinone + NADH + 5 H(+)(in) = a quinol + NAD(+) + 4 H(+)(out). Functionally, NDH-1 shuttles electrons from NADH, via FMN and iron-sulfur (Fe-S) centers, to quinones in the respiratory chain. The immediate electron acceptor for the enzyme in this species is believed to be ubiquinone. Couples the redox reaction to proton translocation (for every two electrons transferred, four hydrogen ions are translocated across the cytoplasmic membrane), and thus conserves the redox energy in a proton gradient. This is NADH-quinone oxidoreductase subunit D 1 from Anaeromyxobacter sp. (strain K).